The chain runs to 67 residues: Large ribosomal subunit protein bL35 (67 aa).

The protein belongs to the bacterial ribosomal protein bL35 family.

The chain is Large ribosomal subunit protein bL35 from Novosphingobium aromaticivorans (strain ATCC 700278 / DSM 12444 / CCUG 56034 / CIP 105152 / NBRC 16084 / F199).